The sequence spans 458 residues: ATP synthase subunit beta (458 aa).

148 to 155 lines the ATP pocket; it reads GGAGVGKT.

The protein belongs to the ATPase alpha/beta chains family. F-type ATPases have 2 components, CF(1) - the catalytic core - and CF(0) - the membrane proton channel. CF(1) has five subunits: alpha(3), beta(3), gamma(1), delta(1), epsilon(1). CF(0) has three main subunits: a(1), b(2) and c(9-12). The alpha and beta chains form an alternating ring which encloses part of the gamma chain. CF(1) is attached to CF(0) by a central stalk formed by the gamma and epsilon chains, while a peripheral stalk is formed by the delta and b chains.

It localises to the cell inner membrane. It catalyses the reaction ATP + H2O + 4 H(+)(in) = ADP + phosphate + 5 H(+)(out). Its function is as follows. Produces ATP from ADP in the presence of a proton gradient across the membrane. The catalytic sites are hosted primarily by the beta subunits. This is ATP synthase subunit beta from Actinobacillus succinogenes (strain ATCC 55618 / DSM 22257 / CCUG 43843 / 130Z).